The chain runs to 82 residues: Small ribosomal subunit protein uS17 (82 aa).

It belongs to the universal ribosomal protein uS17 family. As to quaternary structure, part of the 30S ribosomal subunit.

One of the primary rRNA binding proteins, it binds specifically to the 5'-end of 16S ribosomal RNA. The sequence is that of Small ribosomal subunit protein uS17 from Tolumonas auensis (strain DSM 9187 / NBRC 110442 / TA 4).